The primary structure comprises 148 residues: Endothelial differentiation-related factor 1 homolog (148 aa).

The interval 1–26 (MAESDWDTVTVLRKKGPSAAQAKSKQ) is disordered. The 55-residue stretch at 81 to 135 (IQQGRQSKGMTQKDLATKINEKPQVIADYESGRAIPNNQVMGKIERAIGLKLRGK) folds into the HTH cro/C1-type domain. Positions 92–111 (QKDLATKINEKPQVIADYES) form a DNA-binding region, H-T-H motif.

The protein resides in the nucleus. Probable transcriptional coactivator. The protein is Endothelial differentiation-related factor 1 homolog (EDF1) of Gallus gallus (Chicken).